Reading from the N-terminus, the 625-residue chain is Chaperone protein DnaK (625 aa).

Threonine 197 carries the post-translational modification Phosphothreonine; by autocatalysis. The interval 598–625 (MYKKDDNASGEQSGGKKKDDDVIDAEVE) is disordered.

The protein belongs to the heat shock protein 70 family.

Functionally, acts as a chaperone. This is Chaperone protein DnaK from Campylobacter curvus (strain 525.92).